The following is a 92-amino-acid chain: DNA-binding protein HU (92 aa).

Belongs to the bacterial histone-like protein family. In terms of assembly, homodimer.

Its function is as follows. Histone-like DNA-binding protein which is capable of wrapping DNA to stabilize it, and thus to prevent its denaturation under extreme environmental conditions. In Buchnera aphidicola subsp. Baizongia pistaciae (strain Bp), this protein is DNA-binding protein HU (hup).